Here is a 562-residue protein sequence, read N- to C-terminus: Isochorismate synthase 2, chloroplastic (562 aa).

The N-terminal 55 residues, 1 to 55 (MASLQCSFHFLGTNPKKYNPSSIFQSYSRTSFTKLSSRVSRQRFLRCTLSMNGCE), are a transit peptide targeting the chloroplast.

The protein belongs to the isochorismate synthase family. Mg(2+) is required as a cofactor.

It localises to the plastid. It is found in the chloroplast. It catalyses the reaction chorismate = isochorismate. It functions in the pathway siderophore biosynthesis; salicylate biosynthesis. Its function is as follows. Isochorismate synthase involved in the synthesis of salicylic acid (SA) required for both local and systemic acquired resistance (LAR and SAR) while SA synthesized through the phenylalanine ammonium lyase (PAL) pathway seems to potentiate plant cell death. Also involved in phylloquinone (vitamin K1) synthesis. Has no isochorismate pyruvate lyase (IPL) activity. This chain is Isochorismate synthase 2, chloroplastic (ICS2), found in Arabidopsis thaliana (Mouse-ear cress).